A 1197-amino-acid chain; its full sequence is Sensor protein EvgS (1197 aa).

Residues 1-21 form the signal peptide; it reads MKFLPYIFLLCCGLWSTISFA. At 22–325 the chain is on the cytoplasmic side; it reads DEDYIEYRGI…SMTDENGSVR (304 aa). A helical membrane pass occupies residues 326–346; the sequence is GVMGDILNIITLQTGLNFSPI. The Periplasmic segment spans residues 347-537; it reads TVSHNIHAGT…TWDLYSEQFY (191 aa). A helical membrane pass occupies residues 538–558; sequence IVTTLSVLLVGSSLLWGFYLL. Over 559–1197 the chain is Cytoplasmic; sequence RSVRRRKVIQ…EIAVFCQKND (639 aa). One can recognise a Histidine kinase domain in the interval 718 to 938; that stretch reads TMSHEIRTPI…TFTITIPVEI (221 aa). Histidine 721 is subject to Phosphohistidine; by autocatalysis. One can recognise a Response regulatory domain in the interval 960 to 1074; it reads SILIADDHPT…VLKTHLSQLH (115 aa). Aspartate 1009 carries the post-translational modification 4-aspartylphosphate. Positions 1098 to 1197 constitute an HPt domain; that stretch reads DLQLMQEILM…EIAVFCQKND (100 aa). Residue histidine 1137 is modified to Phosphohistidine.

Post-translationally, activation requires a sequential transfer of a phosphate group from a His in the primary transmitter domain, to an Asp in the receiver domain and to a His in the secondary transmitter domain.

It is found in the cell inner membrane. The enzyme catalyses ATP + protein L-histidine = ADP + protein N-phospho-L-histidine.. In terms of biological role, member of the two-component regulatory system EvgS/EvgA. Phosphorylates EvgA via a four-step phosphorelay in response to environmental signals. This is Sensor protein EvgS (evgS) from Escherichia coli (strain K12).